The chain runs to 298 residues: Oxidoreductase YdhF (298 aa).

Tyrosine 55 serves as the catalytic Proton donor. NADP(+)-binding positions include 158–159 (SN), 209–220 (WSCLGGGRLFND), and 263–264 (SG).

It belongs to the aldo/keto reductase family. Aldo/keto reductase 2 subfamily.

May function as oxidoreductase. This chain is Oxidoreductase YdhF (ydhF), found in Escherichia coli (strain K12).